Consider the following 324-residue polypeptide: 26S proteasome non-ATPase regulatory subunit 7 (324 aa).

An MPN domain is found at 9 to 144 (VVVHPLVLLS…TEAYISVEEV (136 aa)). Residue Lys-180 forms a Glycyl lysine isopeptide (Lys-Gly) (interchain with G-Cter in ubiquitin) linkage. N6-acetyllysine occurs at positions 204, 214, 316, and 317. Residues 281 to 324 (ANRDAEKKEGQEKEESKKDRKEDKEKDKDKEKSDVKKEEKKEKK) form a disordered region.

It belongs to the peptidase M67A family. As to quaternary structure, component of the 19S proteasome regulatory particle complex. The 26S proteasome consists of a 20S core particle (CP) and two 19S regulatory subunits (RP). The regulatory particle is made of a lid composed of 9 subunits including PSMD7, a base containing 6 ATPases and few additional components. Within the complex, PSMD7 interacts with subunit PSMD4 through their respective MPN domain. Interacts with TRIM5.

Component of the 26S proteasome, a multiprotein complex involved in the ATP-dependent degradation of ubiquitinated proteins. This complex plays a key role in the maintenance of protein homeostasis by removing misfolded or damaged proteins, which could impair cellular functions, and by removing proteins whose functions are no longer required. Therefore, the proteasome participates in numerous cellular processes, including cell cycle progression, apoptosis, or DNA damage repair. This is 26S proteasome non-ATPase regulatory subunit 7 (PSMD7) from Homo sapiens (Human).